The chain runs to 980 residues: Exportin-T (980 aa).

Belongs to the exportin family. Expressed in roots, stems, leaves, flowers and embryos.

Its subcellular location is the nucleus. The protein resides in the cytoplasm. Probable tRNA nucleus export receptor which regulates tRNA processing and facilitates tRNA translocation across the nuclear pore complex. Is required for correct leaf initiation at different developmental stages and may play a role in floral patterning. The sequence is that of Exportin-T from Oryza sativa subsp. japonica (Rice).